The sequence spans 317 residues: Ribosomal protein L11 methyltransferase (317 aa).

4 residues coordinate S-adenosyl-L-methionine: Thr-158, Gly-179, Asp-201, and Asn-244.

It belongs to the methyltransferase superfamily. PrmA family.

It is found in the cytoplasm. It carries out the reaction L-lysyl-[protein] + 3 S-adenosyl-L-methionine = N(6),N(6),N(6)-trimethyl-L-lysyl-[protein] + 3 S-adenosyl-L-homocysteine + 3 H(+). Methylates ribosomal protein L11. In Streptococcus pyogenes serotype M5 (strain Manfredo), this protein is Ribosomal protein L11 methyltransferase.